The sequence spans 568 residues: Sulfite reductase [NADPH] hemoprotein beta-component (568 aa).

[4Fe-4S] cluster-binding residues include Cys426, Cys432, Cys471, and Cys475. Siroheme is bound at residue Cys475.

This sequence belongs to the nitrite and sulfite reductase 4Fe-4S domain family. Alpha(8)-beta(8). The alpha component is a flavoprotein, the beta component is a hemoprotein. The cofactor is siroheme. Requires [4Fe-4S] cluster as cofactor.

It carries out the reaction hydrogen sulfide + 3 NADP(+) + 3 H2O = sulfite + 3 NADPH + 4 H(+). The protein operates within sulfur metabolism; hydrogen sulfide biosynthesis; hydrogen sulfide from sulfite (NADPH route): step 1/1. In terms of biological role, component of the sulfite reductase complex that catalyzes the 6-electron reduction of sulfite to sulfide. This is one of several activities required for the biosynthesis of L-cysteine from sulfate. The chain is Sulfite reductase [NADPH] hemoprotein beta-component from Xylella fastidiosa (strain 9a5c).